Reading from the N-terminus, the 1314-residue chain is E3 ubiquitin-protein ligase RNF123 (1314 aa).

Alanine 2 is modified (N-acetylalanine). Positions 74–254 (VDSEDEESQG…VAFNFGSRPL (181 aa)) constitute a B30.2/SPRY domain. The disordered stretch occupies residues 460-481 (HRSSREGKDSAEDRAEAAEERP). Residues 462–481 (SSREGKDSAEDRAEAAEERP) are compositionally biased toward basic and acidic residues. Serine 675 is modified (phosphoserine). Arginine 683 carries the asymmetric dimethylarginine modification. Residues 968–974 (WILVRLW) are interaction with NFKB1. Zn(2+) contacts are provided by cysteine 1254, cysteine 1257, cysteine 1269, histidine 1271, cysteine 1274, cysteine 1277, cysteine 1288, and cysteine 1291. The RING-type zinc-finger motif lies at 1254 to 1292 (CPICYAHPISAVFQPCGHKSCKACIDQHLMNNKDCFFCK).

As to quaternary structure, component of the KPC complex composed of RNF123/KPC1 and UBAC1/KPC2. Interacts with UBAC1 and CDKN1B via its N-terminal domain. Interacts with RIGI (via N-terminus) and IFIH1 (via N-terminus). Ubiquitinated, leading to its degradation. Deubiquitinated by USP19, thereby stimulating CDKN1B ubiquitin-dependent degradation.

Its subcellular location is the cytoplasm. It carries out the reaction S-ubiquitinyl-[E2 ubiquitin-conjugating enzyme]-L-cysteine + [acceptor protein]-L-lysine = [E2 ubiquitin-conjugating enzyme]-L-cysteine + N(6)-ubiquitinyl-[acceptor protein]-L-lysine.. It functions in the pathway protein modification; protein ubiquitination. In terms of biological role, catalytic subunit of the KPC complex that acts as E3 ubiquitin-protein ligase. Promotes the ubiquitination and proteasome-mediated degradation of CDKN1B which is the cyclin-dependent kinase inhibitor at the G0-G1 transition of the cell cycle. Also acts as a key regulator of the NF-kappa-B signaling by promoting maturation of the NFKB1 component of NF-kappa-B. Acts by catalyzing ubiquitination of the NFKB1 p105 precursor, leading to limited proteasomal degradation of NFKB1 p105 and generation of the active NFKB1 p50 subunit. Functions also as an inhibitor of innate antiviral signaling mediated by RIGI and IFIH1 independently of its E3 ligase activity. Interacts with the N-terminal CARD domains of RIGI and IFIH1 and competes with the downstream adapter MAVS. This is E3 ubiquitin-protein ligase RNF123 from Oryctolagus cuniculus (Rabbit).